The following is a 189-amino-acid chain: Ribonuclease HII (189 aa).

An RNase H type-2 domain is found at 1-189 (MIAGVDEAGR…IAALLKNNKK (189 aa)). A divalent metal cation is bound by residues Asp-6, Glu-7, and Asp-98.

The protein belongs to the RNase HII family. The cofactor is Mn(2+). Mg(2+) serves as cofactor.

It is found in the cytoplasm. The catalysed reaction is Endonucleolytic cleavage to 5'-phosphomonoester.. Its function is as follows. Endonuclease that specifically degrades the RNA of RNA-DNA hybrids. The polypeptide is Ribonuclease HII (Dichelobacter nodosus (strain VCS1703A)).